A 262-amino-acid polypeptide reads, in one-letter code: Serine/arginine-rich SC35-like splicing factor SCL30A (262 aa).

Disordered regions lie at residues 1–38 (MRGR…LPTS) and 115–262 (ENRK…SPSQ). S9 and S20 each carry phosphoserine. The RRM domain maps to 37-115 (TSLLVRNLRH…RELTVVFAEE (79 aa)). Residues 115-140 (ENRKKPTEMRTRDRGGRSNRFQDRRR) show a composition bias toward basic and acidic residues. Residues 150–161 (PPRRGRRSRSRS) show a composition bias toward basic residues. Phosphoserine is present on residues S166, S174, S176, and S178. The segment covering 180–190 (QDRRYEKERSY) has biased composition (basic and acidic residues). Phosphoserine is present on residues S191 and S193. The span at 209–226 (VKSHSRSPRRSVSPRKNR) shows a compositional bias: basic residues. The segment covering 234-246 (RSQSPVPRQSRSP) has biased composition (low complexity). Phosphoserine is present on residues S235, S259, and S261.

The protein belongs to the splicing factor SR family. SCL subfamily. As to quaternary structure, component of the spliceosome. Interacts with SNRNP35, CYP59 and RS2Z33.

Its subcellular location is the nucleus speckle. Its function is as follows. Involved in intron recognition and spliceosome assembly. Binds probably to multiple 5'-GAAG-3' repeats found in its third intron, suggesting autoregulation of alternative splicing. May be necessary for accurate splicing of the 3' region of introns. This Arabidopsis thaliana (Mouse-ear cress) protein is Serine/arginine-rich SC35-like splicing factor SCL30A (SCL30A).